An 88-amino-acid polypeptide reads, in one-letter code: uncharacterized protein (88 aa).

This is an uncharacterized protein from Bacillus subtilis (strain 168).